Here is a 161-residue protein sequence, read N- to C-terminus: MTGLKQISIYTDGSCLGNPGPGGYGIVLKYKKQTKELADGFALTTNNRMELLAPIVALEVLKVPCQVILTSDSQYMRQGITQWIHGWKRKGWLTSAGQPVKNVDLWKRLDTVSQRHQIDWRWVKGHAGHTENERCDDLARQAAEAKPSQEDSGYINQQAQA.

An RNase H type-1 domain is found at 3-144 (GLKQISIYTD…CDDLARQAAE (142 aa)). Mg(2+) contacts are provided by aspartate 12, glutamate 50, aspartate 72, and aspartate 136. Residues 133 to 161 (ERCDDLARQAAEAKPSQEDSGYINQQAQA) are disordered. Residues 150–161 (EDSGYINQQAQA) are compositionally biased toward polar residues.

It belongs to the RNase H family. Monomer. Requires Mg(2+) as cofactor.

The protein localises to the cytoplasm. The enzyme catalyses Endonucleolytic cleavage to 5'-phosphomonoester.. Functionally, endonuclease that specifically degrades the RNA of RNA-DNA hybrids. The chain is Ribonuclease H from Shewanella halifaxensis (strain HAW-EB4).